The chain runs to 477 residues: Ribulose bisphosphate carboxylase large chain (477 aa).

Residues Met1–Ser2 constitute a propeptide that is removed on maturation. Pro3 carries the post-translational modification N-acetylproline. The residue at position 14 (Lys14) is an N6,N6,N6-trimethyllysine. Residues Asn123 and Thr173 each contribute to the substrate site. The active-site Proton acceptor is Lys175. Lys177 lines the substrate pocket. Residues Lys201, Asp203, and Glu204 each contribute to the Mg(2+) site. N6-carboxylysine is present on Lys201. His294 functions as the Proton acceptor in the catalytic mechanism. 3 residues coordinate substrate: Arg295, His327, and Ser379.

It belongs to the RuBisCO large chain family. Type I subfamily. As to quaternary structure, heterohexadecamer of 8 large chains and 8 small chains; disulfide-linked. The disulfide link is formed within the large subunit homodimers. Mg(2+) is required as a cofactor. In terms of processing, the disulfide bond which can form in the large chain dimeric partners within the hexadecamer appears to be associated with oxidative stress and protein turnover.

The protein localises to the plastid. It localises to the chloroplast. It catalyses the reaction 2 (2R)-3-phosphoglycerate + 2 H(+) = D-ribulose 1,5-bisphosphate + CO2 + H2O. It carries out the reaction D-ribulose 1,5-bisphosphate + O2 = 2-phosphoglycolate + (2R)-3-phosphoglycerate + 2 H(+). RuBisCO catalyzes two reactions: the carboxylation of D-ribulose 1,5-bisphosphate, the primary event in carbon dioxide fixation, as well as the oxidative fragmentation of the pentose substrate in the photorespiration process. Both reactions occur simultaneously and in competition at the same active site. The polypeptide is Ribulose bisphosphate carboxylase large chain (Manihot esculenta (Cassava)).